We begin with the raw amino-acid sequence, 180 residues long: Adenine phosphoribosyltransferase (180 aa).

This sequence belongs to the purine/pyrimidine phosphoribosyltransferase family. In terms of assembly, homodimer.

It is found in the cytoplasm. It catalyses the reaction AMP + diphosphate = 5-phospho-alpha-D-ribose 1-diphosphate + adenine. The protein operates within purine metabolism; AMP biosynthesis via salvage pathway; AMP from adenine: step 1/1. Catalyzes a salvage reaction resulting in the formation of AMP, that is energically less costly than de novo synthesis. This is Adenine phosphoribosyltransferase from Rhizobium meliloti (strain 1021) (Ensifer meliloti).